The following is a 128-amino-acid chain: MSRPDWDEYFLGIATAAAQRSDCERSKVGAVVVKDRRVRGTGYNGAPAGAAGCSTCPRRLSGAVPGVSDYSSGATRCVAVHAEANALLYCDREDLIGATLYVTREPCYACSNLIAASGIERVVYPKES.

Residues 5-128 (DWDEYFLGIA…IERVVYPKES (124 aa)) form the CMP/dCMP-type deaminase domain. Residue His-81 participates in Zn(2+) binding. The active-site Proton donor is Glu-83. 2 residues coordinate Zn(2+): Cys-107 and Cys-110.

The protein belongs to the cytidine and deoxycytidylate deaminase family.

It carries out the reaction dCMP + H2O + H(+) = dUMP + NH4(+). The protein is Deoxycytidylate deaminase (36.1) of Mycobacterium (Mycobacteriophage D29).